A 246-amino-acid chain; its full sequence is Small ribosomal subunit protein uS2 (246 aa).

Belongs to the universal ribosomal protein uS2 family.

In Azotobacter vinelandii (strain DJ / ATCC BAA-1303), this protein is Small ribosomal subunit protein uS2.